Consider the following 119-residue polypeptide: T cell receptor alpha variable 29/delta variable 5 (119 aa).

The N-terminal stretch at 1 to 21 (MAMLLGASVLILWLQPDWVNS) is a signal peptide. Residues 22–119 (QQKNDDQQVK…DSAVYFCAAS (98 aa)) enclose the Ig-like domain. Cys49 and Cys116 are joined by a disulfide. Asn93 is a glycosylation site (N-linked (GlcNAc...) asparagine).

Alpha-beta TR is a heterodimer composed of an alpha and beta chain; disulfide-linked. The alpha-beta TR is associated with the transmembrane signaling CD3 coreceptor proteins to form the TR-CD3 (TcR or TCR). The assembly of alpha-beta TR heterodimers with CD3 occurs in the endoplasmic reticulum where a single alpha-beta TR heterodimer associates with one CD3D-CD3E heterodimer, one CD3G-CD3E heterodimer and one CD247 homodimer forming a stable octameric structure. CD3D-CD3E and CD3G-CD3E heterodimers preferentially associate with TR alpha and TR beta chains, respectively. The association of the CD247 homodimer is the last step of TcR assembly in the endoplasmic reticulum and is required for transport to the cell surface.

Its subcellular location is the cell membrane. In terms of biological role, v region of the variable domain of T cell receptor (TR) alpha chain that participates in the antigen recognition. Alpha-beta T cell receptors are antigen specific receptors which are essential to the immune response and are present on the cell surface of T lymphocytes. Recognize peptide-major histocompatibility (MH) (pMH) complexes that are displayed by antigen presenting cells (APC), a prerequisite for efficient T cell adaptive immunity against pathogens. Binding of alpha-beta TR to pMH complex initiates TR-CD3 clustering on the cell surface and intracellular activation of LCK that phosphorylates the ITAM motifs of CD3G, CD3D, CD3E and CD247 enabling the recruitment of ZAP70. In turn ZAP70 phosphorylates LAT, which recruits numerous signaling molecules to form the LAT signalosome. The LAT signalosome propagates signal branching to three major signaling pathways, the calcium, the mitogen-activated protein kinase (MAPK) kinase and the nuclear factor NF-kappa-B (NF-kB) pathways, leading to the mobilization of transcription factors that are critical for gene expression and essential for T cell growth and differentiation. The T cell repertoire is generated in the thymus, by V-(D)-J rearrangement. This repertoire is then shaped by intrathymic selection events to generate a peripheral T cell pool of self-MH restricted, non-autoaggressive T cells. Post-thymic interaction of alpha-beta TR with the pMH complexes shapes TR structural and functional avidity. This chain is T cell receptor alpha variable 29/delta variable 5, found in Homo sapiens (Human).